A 543-amino-acid chain; its full sequence is Intermediate filament protein ifb-2 (543 aa).

Residues 1-10 are compositionally biased toward polar residues; that stretch reads MSAVSYSMHR. Residues 1 to 27 form a disordered region; sequence MSAVSYSMHRTTTTTSSSSHGGVSAGH. A head region spans residues 1-42; the sequence is MSAVSYSMHRTTTTTSSSSHGGVSAGHAAEEFVASAEREKQE. Positions 39-388 constitute an IF rod domain; sequence EKQEMQQLNS…KLVESEEGRF (350 aa). The segment at 43 to 74 is coil 1A; that stretch reads MQQLNSRLEVYISRVRQLEDRNKELVIELDTL. The tract at residues 75-88 is linker 1; the sequence is RGSLGNDIGQIKFK. The tract at residues 89–223 is coil 1B; that stretch reads FNDSLVKVRR…RIHSQEITEL (135 aa). The segment at 224-240 is linker 12; it reads RTLLAQAPADTREFFKN. The coil 2 stretch occupies residues 241 to 387; it reads ELALAIREIK…RKLVESEEGR (147 aa). Residues 388-542 form a tail region; the sequence is FTHVGQGVVV…SHIQTTVASS (155 aa). Residues 420-538 enclose the LTD domain; it reads TRSSFKRHAK…IEKASHIQTT (119 aa).

Belongs to the intermediate filament family. In terms of tissue distribution, expression is restricted to a discrete circumferential subapical layer within the intestinal terminal web (known as the 'endotube'); this layer joins directly to the apical junction complexes that connect adjacent gut cells.

The protein localises to the cytoplasm. In terms of biological role, cytoplasmic intermediate filaments provide mechanical strength to cells. Not essential protein. Component of the terminal web (organelle-depleted, intermediate filament-rich layer of cytoplasm that underlies the apical microvilli of polarized epithelial cells) in embryonic through to adult gut cells. Correct localization of filaments requires let-413. In Caenorhabditis elegans, this protein is Intermediate filament protein ifb-2 (ifb-2).